Here is a 350-residue protein sequence, read N- to C-terminus: Biotin synthase (350 aa).

The Radical SAM core domain maps to 38 to 256 (NYVQVSTLLS…IAVARIMMPE (219 aa)). Residues Cys53, Cys57, and Cys60 each coordinate [4Fe-4S] cluster. Cys97, Cys128, Cys188, and Arg260 together coordinate [2Fe-2S] cluster.

This sequence belongs to the radical SAM superfamily. Biotin synthase family. As to quaternary structure, homodimer. [4Fe-4S] cluster serves as cofactor. It depends on [2Fe-2S] cluster as a cofactor.

It catalyses the reaction (4R,5S)-dethiobiotin + (sulfur carrier)-SH + 2 reduced [2Fe-2S]-[ferredoxin] + 2 S-adenosyl-L-methionine = (sulfur carrier)-H + biotin + 2 5'-deoxyadenosine + 2 L-methionine + 2 oxidized [2Fe-2S]-[ferredoxin]. It participates in cofactor biosynthesis; biotin biosynthesis; biotin from 7,8-diaminononanoate: step 2/2. Its function is as follows. Catalyzes the conversion of dethiobiotin (DTB) to biotin by the insertion of a sulfur atom into dethiobiotin via a radical-based mechanism. This Aliivibrio salmonicida (strain LFI1238) (Vibrio salmonicida (strain LFI1238)) protein is Biotin synthase.